A 402-amino-acid polypeptide reads, in one-letter code: MAKEKFERTKPHINIGTIGHVDHGKTTLTAAITAVLAVAGDTELMDYDAIDNAPEERERGITIATSHVEYETATRHYAHVDCPGHADYVKNMITGAAQMDGAILVIAATDGPMAQTREHILLSKQVGVPYIVVFLNKEDQLDDEDKEEMLELVEMEVRELLSEYDFPGDDTPIVAGSAFQALEEAKTGTLGEWSAKIMELMDAVDEYIPEPKRETDKDFLMAIEDIFTIQGRGTVVTGKVDRGQVCVGDEVEIVGLKDTQKTTVTGVEMFRKEMDCGIAGDNCGVLIRGIDKEAVQRGMVLCKPGSITPHTQFEAEVYVLTKEEGGRHTPFFDNYRPQFYVRTTDVTGSVKLQEGTEMVMPGDNVKINVELIAPIALDEGTRFAIREGGRTVGAGVVSKIIA.

Residues 10-212 (KPHINIGTIG…AVDEYIPEPK (203 aa)) enclose the tr-type G domain. Residues 19–26 (GHVDHGKT) are G1. GTP is bound at residue 19–26 (GHVDHGKT). Residue Thr-26 participates in Mg(2+) binding. Residues 60 to 64 (GITIA) form a G2 region. A G3 region spans residues 81-84 (DCPG). GTP-binding positions include 81 to 85 (DCPGH) and 136 to 139 (NKED). The G4 stretch occupies residues 136–139 (NKED). The G5 stretch occupies residues 177–179 (SAF).

It belongs to the TRAFAC class translation factor GTPase superfamily. Classic translation factor GTPase family. EF-Tu/EF-1A subfamily. Monomer.

It localises to the cytoplasm. The enzyme catalyses GTP + H2O = GDP + phosphate + H(+). In terms of biological role, GTP hydrolase that promotes the GTP-dependent binding of aminoacyl-tRNA to the A-site of ribosomes during protein biosynthesis. The polypeptide is Elongation factor Tu (Sulfurovum sp. (strain NBC37-1)).